The primary structure comprises 172 residues: Signal peptidase complex catalytic subunit SEC11 (172 aa).

The Cytoplasmic segment spans residues 1 to 14 (MLSGLQNPRQAAAQ). The helical; Signal-anchor for type II membrane protein transmembrane segment at 15–35 (LMNFALILSTAFMMWKGLSVA) threads the bilayer. At 36 to 172 (TDSPSPIVVV…MGLLVVIQRE (137 aa)) the chain is on the lumenal side. Catalysis depends on charge relay system residues S49, H90, and D115. The C-terminal short (CTS) helix stretch occupies residues 158–169 (VMLGIMGLLVVI).

The protein belongs to the peptidase S26B family. Component of the signal peptidase complex (SPC) composed of a catalytic subunit SEC11 and three accessory subunits SPC1, SPC2 and SPC3. The complex induces a local thinning of the ER membrane which is used to measure the length of the signal peptide (SP) h-region of protein substrates. This ensures the selectivity of the complex towards h-regions shorter than 18-20 amino acids. SPC associates with the translocon complex.

The protein localises to the endoplasmic reticulum membrane. The enzyme catalyses Cleavage of hydrophobic, N-terminal signal or leader sequences from secreted and periplasmic proteins.. Its function is as follows. Catalytic component of the signal peptidase complex (SPC) which catalyzes the cleavage of N-terminal signal sequences from nascent proteins as they are translocated into the lumen of the endoplasmic reticulum. Specifically cleaves N-terminal signal peptides that contain a hydrophobic alpha-helix (h-region) shorter than 18-20 amino acids. The protein is Signal peptidase complex catalytic subunit SEC11 (SEC11) of Metarhizium acridum (strain CQMa 102).